The following is a 45-amino-acid chain: Large ribosomal subunit protein bL34 (45 aa).

The protein belongs to the bacterial ribosomal protein bL34 family.

This Salinispora tropica (strain ATCC BAA-916 / DSM 44818 / JCM 13857 / NBRC 105044 / CNB-440) protein is Large ribosomal subunit protein bL34.